Reading from the N-terminus, the 236-residue chain is Large ribosomal subunit protein eL6 (236 aa).

Belongs to the eukaryotic ribosomal protein eL6 family.

The sequence is that of Large ribosomal subunit protein eL6 (rpl6) from Dictyostelium discoideum (Social amoeba).